The chain runs to 375 residues: Outer membrane porin C (375 aa).

An N-terminal signal peptide occupies residues 1–21; it reads MKVKVLSLLVPALLVAGAANA. Residues 22–27 form a beta stranded membrane-spanning segment; sequence AEVYNK. The Periplasmic segment spans residues 28-29; sequence DG. A beta stranded transmembrane segment spans residues 30–44; the sequence is NKLDLYGKVDGLHYF. Topologically, residues 45-50 are extracellular; that stretch reads SDDKSV. Residues 51–66 traverse the membrane as a beta stranded segment; it reads DGDQTYMRLGFKGETQ. The Periplasmic portion of the chain corresponds to 67–70; that stretch reads VTDQ. A beta stranded membrane pass occupies residues 71–82; it reads LTGYGQWEYQIQ. Over 83-91 the chain is Extracellular; it reads GNAPESENN. Residues 92–103 form a beta stranded membrane-spanning segment; that stretch reads SWTRVAFAGLKF. Residues 104–105 are Periplasmic-facing; sequence QD. The chain crosses the membrane as a beta stranded span at residues 106 to 113; the sequence is IGSFDYGR. Topologically, residues 114–146 are extracellular; it reads NYGVVYDVTSWTDVLPEFGGDTYGSDNFMQQRG. Residues 147 to 156 form a beta stranded membrane-spanning segment; the sequence is NGFATYRNTD. At 157–163 the chain is on the periplasmic side; the sequence is FFGLVDG. A beta stranded membrane pass occupies residues 164–172; it reads LNFAVQYQG. Topologically, residues 173–201 are extracellular; the sequence is QNGSVSGENDPDFTGHGITNNGRKALRQN. Residues 202–212 form a beta stranded membrane-spanning segment; it reads GDGVGGSITYD. At 213–215 the chain is on the periplasmic side; the sequence is YEG. A beta stranded transmembrane segment spans residues 216 to 226; sequence FGVGAAVSSSK. At 227–241 the chain is on the extracellular side; the sequence is RTWDQNNTGLIGTGD. The chain crosses the membrane as a beta stranded span at residues 242–254; that stretch reads RAETYTGGLKYDA. The Periplasmic segment spans residues 255–256; it reads NN. A beta stranded transmembrane segment spans residues 257-267; sequence IYLAAQYTQTY. The Extracellular portion of the chain corresponds to 268–279; that stretch reads NATRVGSLGWAN. The beta stranded transmembrane segment at 280 to 292 threads the bilayer; the sequence is KAQNFEAVAQYQF. The Periplasmic portion of the chain corresponds to 293–294; it reads DF. Residues 295 to 309 form a beta stranded membrane-spanning segment; it reads GLRPSVAYLQSKGKN. Over 310-320 the chain is Extracellular; sequence LGVVAGRNYDD. The beta stranded transmembrane segment at 321–335 threads the bilayer; it reads EDILKYVDVGATYYF. At 336-338 the chain is on the periplasmic side; it reads NKN. The chain crosses the membrane as a beta stranded span at residues 339–348; the sequence is MSTYVDYKIN. The Extracellular portion of the chain corresponds to 349-364; that stretch reads LLDDNQFTRAAGINTD. A beta stranded transmembrane segment spans residues 365–375; the sequence is DIVALGLVYQF.

The protein belongs to the Gram-negative porin family. In terms of assembly, homotrimer. Forms mixed heterotrimers with OmpF; other mixed heterotrimers are also probable. The N- and C-termini are two parts of the same strand. Extracellular loop 3 folds back into the lumen of the barrel forming a constriction zone that controls the pore size, while the trimer interface is formed by the packing of hydrophobic residues on the outer edges of beta strands 1 to 5 and further stabilized by extracellular loop 2 which reaches into the neighboring monomer.

It localises to the cell outer membrane. Its function is as follows. Forms pores that allow passive diffusion of small molecules across the outer membrane, including some antibiotics. Variation of the residues in the constriction zone modifies the transverse electric field in the zone, altering antibiotic resistance. (Microbial infection) Is not susceptible to CdiA-EC536-mediated toxicity, which uses OmpC-OmpF heterotrimers of some strains as its outer membrane receptor. Mutagenesis of extracellular loops L4 or L5 of this protein confers susceptibility to the toxin. The protein is Outer membrane porin C (ompC) of Escherichia coli O6:H1 (strain CFT073 / ATCC 700928 / UPEC).